The sequence spans 1294 residues: Leucine-rich repeat receptor protein kinase MSP1 (1294 aa).

Positions 1–22 (MVSNSFWLFILLVSFIPISAWA) are cleaved as a signal peptide. 5 LRR repeats span residues 88 to 112 (FQSL…LGNL), 113 to 136 (QNLQ…LYNL), 138 to 160 (MLKE…IAQL), 161 to 184 (QHLT…LGSL), and 186 to 207 (NLEL…TFGN). Residues Asn-198, Asn-207, and Asn-220 are each glycosylated (N-linked (GlcNAc...) asparagine). LRR repeat units follow at residues 232-256 (LTNL…IGQL), 258-280 (NLEL…IGSL), 282-304 (QLKL…ISGL), 305-328 (SSLT…MGEL), 330-352 (NLTQ…LGNC), 353-376 (KKLT…FADL), 378-400 (AIVS…IQKW), 401-422 (KNAR…VLPL), 423-446 (QHLL…ICQA), 447-469 (NSLH…AFKG), 471-493 (TNLT…YLAE), 494-517 (LPLV…LWES), 519-541 (TLLE…IGKL), 542-565 (SVLQ…VGDL), 566-589 (RNLT…LFNC), 591-613 (KLAT…ISHL), 614-637 (TLLD…ICVG), 649-673 (LQHH…IKNC), 675-697 (MVMV…LGEL), 698-721 (TNLT…SGPL), 722-745 (VQLQ…IGQI), 746-770 (LPKI…LLCN), and 772-794 (YLNH…CPDG). Asn-330 and Asn-359 each carry an N-linked (GlcNAc...) asparagine glycan. N-linked (GlcNAc...) asparagine glycans are attached at residues Asn-458 and Asn-472. N-linked (GlcNAc...) asparagine glycans are attached at residues Asn-567, Asn-570, and Asn-601. Asn-687, Asn-699, and Asn-704 each carry an N-linked (GlcNAc...) asparagine glycan. N-linked (GlcNAc...) asparagine glycosylation is found at Asn-805, Asn-821, and Asn-832. LRR repeat units follow at residues 822-846 (FTQL…LSDL) and 848-870 (SLNY…ICNI). The helical transmembrane segment at 917 to 937 (ITICAFTFVIIIVLVLLAVYL) threads the bilayer. One can recognise a Protein kinase domain in the interval 1002–1282 (FSKVHIIGDG…KGLKMTHGME (281 aa)). Residues 1008 to 1016 (IGDGGFGTV) and Lys-1030 each bind ATP. The Proton acceptor role is filled by Asp-1129.

It belongs to the protein kinase superfamily. Ser/Thr protein kinase family. In terms of assembly, interacts with TDL1A. As to expression, expressed in anthers and ovules during meiosis.

The protein resides in the cell membrane. The catalysed reaction is L-seryl-[protein] + ATP = O-phospho-L-seryl-[protein] + ADP + H(+). It carries out the reaction L-threonyl-[protein] + ATP = O-phospho-L-threonyl-[protein] + ADP + H(+). Its function is as follows. Receptor-like kinase that plays important roles in restricting the number of cells entering into male and female sporogenesis. Involved in cell specification during anther development and initiation of anther wall formation. The sequence is that of Leucine-rich repeat receptor protein kinase MSP1 from Oryza sativa subsp. japonica (Rice).